We begin with the raw amino-acid sequence, 231 residues long: Putative carboxymethylenebutenolidase (231 aa).

Catalysis depends on residues Cys118, Asp167, and His199.

It belongs to the dienelactone hydrolase family.

The catalysed reaction is 2-(5-oxo-2,5-dihydrofuran-2-ylidene)acetate + H2O = 4-oxohex-2-enedioate + H(+). The chain is Putative carboxymethylenebutenolidase from Aquifex aeolicus (strain VF5).